The primary structure comprises 125 residues: Desulfoferrodoxin (125 aa).

Residues histidine 49, histidine 69, histidine 75, cysteine 115, and histidine 118 each coordinate Fe cation.

It belongs to the desulfoferrodoxin family. Requires Cu(2+) as cofactor.

It catalyses the reaction reduced [rubredoxin] + superoxide + 2 H(+) = oxidized [rubredoxin] + H2O2. In terms of biological role, catalyzes the reduction of superoxide to hydrogen peroxide, using electrons from NADH and NADH:rubredoxin oxidoreductase (NROR) and rubredoxin (Rd) as electron transport intermediaries between NADH and Dfx. Is a key factor in the superoxide reductase dependent part of a pathway for detoxification of reactive oxygen species (ROS) in C.acetobutylicum, an obligate anaerobic bacterium. The protein is Desulfoferrodoxin (dfx) of Clostridium acetobutylicum (strain ATCC 824 / DSM 792 / JCM 1419 / IAM 19013 / LMG 5710 / NBRC 13948 / NRRL B-527 / VKM B-1787 / 2291 / W).